The sequence spans 416 residues: Calreticulin (416 aa).

The first 25 residues, 1 to 25, serve as a signal peptide directing secretion; that stretch reads MENRGRNPSFLSLLLLLSLFAIASA. Residue Asn57 is glycosylated (N-linked (GlcNAc...) asparagine). Residues Cys111 and Cys143 are joined by a disulfide bond. Positions 115, 117, 134, and 141 each coordinate an alpha-D-glucoside. Asn157 is a glycosylation site (N-linked (GlcNAc...) asparagine). Tandem repeats lie at residues 197–208, 216–227, 233–244, 251–262, 266–276, 280–290, and 294–304. Positions 197–262 are 4 X approximate repeats; sequence KQTGSLYTDW…EAKKPEDWDD (66 aa). Positions 217–241 are enriched in basic and acidic residues; that stretch reads PEAKKPEDWDDKEFIPDPEDKKPEG. The tract at residues 217–281 is disordered; it reads PEAKKPEDWD…TIPNPEYKGP (65 aa). Positions 266 to 304 are 3 X approximate repeats; sequence GEWTAPTIPNPEYKGPWKAKKIKNPNYKGKWKAPMIDNP. Residue Glu324 participates in an alpha-D-glucoside binding. Positions 351-381 are enriched in basic and acidic residues; that stretch reads EETWGKQKDAEKAAFEELEKKREEEETKDDP. The tract at residues 351–416 is disordered; the sequence is EETWGKQKDA…DKDDDQHDEL (66 aa). A compositionally biased stretch (acidic residues) spans 382-400; it reads VESDAEDEDEAEADDSDKD. Basic and acidic residues predominate over residues 401–416; the sequence is DADKSDDKDDDQHDEL. The Prevents secretion from ER motif lies at 413–416; the sequence is HDEL.

The protein belongs to the calreticulin family.

It is found in the endoplasmic reticulum lumen. Molecular calcium-binding chaperone promoting folding, oligomeric assembly and quality control in the ER via the calreticulin/calnexin cycle. This lectin may interact transiently with almost all of the monoglucosylated glycoproteins that are synthesized in the ER. In Beta vulgaris (Sugar beet), this protein is Calreticulin.